Here is a 505-residue protein sequence, read N- to C-terminus: Trans-cinnamate 4-monooxygenase (505 aa).

Residues 3-23 traverse the membrane as a helical segment; that stretch reads LLLIEKTLVALFAAIIGAILI. (E)-cinnamate contacts are provided by residues 213-218 and Ala-306; that span reads RSRLAQ. Cys-447 contributes to the heme binding site.

The protein belongs to the cytochrome P450 family. The cofactor is heme.

The protein localises to the membrane. The catalysed reaction is (E)-cinnamate + reduced [NADPH--hemoprotein reductase] + O2 = (E)-4-coumarate + oxidized [NADPH--hemoprotein reductase] + H2O + H(+). It functions in the pathway phenylpropanoid metabolism; trans-4-coumarate biosynthesis; trans-4-coumarate from trans-cinnamate: step 1/1. Inactivated by piperonylic acid. In terms of biological role, catalyzes the first oxidative step of the phenylpropanoid pathway in higher plants by transforming trans-cinnamate into p-coumarate. The compounds formed by this pathway are essential components for lignification, pollination, and defense against ultraviolet light, predators and pathogens. Can also use 2-naphthoic acid as substrate. This Helianthus tuberosus (Jerusalem artichoke) protein is Trans-cinnamate 4-monooxygenase.